Reading from the N-terminus, the 113-residue chain is Small ribosomal subunit protein uS15 (113 aa).

Belongs to the universal ribosomal protein uS15 family. Part of the 30S ribosomal subunit. Forms a bridge to the 50S subunit in the 70S ribosome, contacting the 23S rRNA.

In terms of biological role, one of the primary rRNA binding proteins, it binds directly to 16S rRNA where it helps nucleate assembly of the platform of the 30S subunit by binding and bridging several RNA helices of the 16S rRNA. Forms an intersubunit bridge (bridge B4) with the 23S rRNA of the 50S subunit in the ribosome. This is Small ribosomal subunit protein uS15 from Haemophilus influenzae (strain PittEE).